Consider the following 124-residue polypeptide: Transmembrane protein 254 (124 aa).

3 helical membrane-spanning segments follow: residues 16–36 (LFWV…IFWP), 62–82 (VHAW…YAIV), and 96–116 (LLWF…LIAF).

The protein localises to the membrane. The sequence is that of Transmembrane protein 254 (TMEM254) from Bos taurus (Bovine).